The following is a 162-amino-acid chain: MLYALQWRKYMVEENNNEELRHLVRIMNTDLQGAKPVQYALTGLPGVGRRTAKLIAKGAGVDPSAILGYLPEEEVAKLDTAIGKFEDIVPSWMLNRQKDLATGQDKHLLGTDILLTFREDINNLKKVRAYRGLRHERGLKVRGQRTKSTGRRGSTVGVSRKK.

A disordered region spans residues 142–162 (RGQRTKSTGRRGSTVGVSRKK).

The protein belongs to the universal ribosomal protein uS13 family. In terms of assembly, part of the 30S ribosomal subunit. Forms a loose heterodimer with protein S19. Forms two bridges to the 50S subunit in the 70S ribosome.

Its function is as follows. Located at the top of the head of the 30S subunit, it contacts several helices of the 16S rRNA. In the 70S ribosome it contacts the 23S rRNA (bridge B1a) and protein L5 of the 50S subunit (bridge B1b), connecting the 2 subunits; these bridges are implicated in subunit movement. The chain is Small ribosomal subunit protein uS13 from Methanosarcina acetivorans (strain ATCC 35395 / DSM 2834 / JCM 12185 / C2A).